We begin with the raw amino-acid sequence, 178 residues long: Ribosomal RNA small subunit methyltransferase G (178 aa).

Residues Gly-54, Leu-59, 105–106 (LE), and Arg-120 each bind S-adenosyl-L-methionine.

The protein belongs to the methyltransferase superfamily. RNA methyltransferase RsmG family.

Its subcellular location is the cytoplasm. The catalysed reaction is guanosine(527) in 16S rRNA + S-adenosyl-L-methionine = N(7)-methylguanosine(527) in 16S rRNA + S-adenosyl-L-homocysteine. Its function is as follows. Specifically methylates the N7 position of guanine in position 527 of 16S rRNA. The polypeptide is Ribosomal RNA small subunit methyltransferase G (Helicobacter pylori (strain HPAG1)).